Consider the following 696-residue polypeptide: Spindle assembly checkpoint component MAD1 (696 aa).

Disordered regions lie at residues 1–22 (MSTG…SINN) and 394–415 (QIHA…TENK). Residues 402–413 (KQQEQEKEENTE) are compositionally biased toward basic and acidic residues.

It belongs to the MAD1 family. As to quaternary structure, component of the mitotic checkpoint complex (MCC).

The protein localises to the nucleus. Its function is as follows. Central component of the spindle assembly checkpoint which is a feedback control that prevents cells with incompletely assembled spindles from leaving mitosis. This chain is Spindle assembly checkpoint component MAD1, found in Candida albicans (strain SC5314 / ATCC MYA-2876) (Yeast).